A 73-amino-acid polypeptide reads, in one-letter code: ComX pheromone (73 aa).

A propeptide spanning residues Met1–Ser52 is cleaved from the precursor. Trp54 carries 3'-farnesyl-2',N2-cyclotryptophan lipidation. Residues Ala59–Ile73 constitute a propeptide that is removed on maturation.

As to quaternary structure, interacts directly with the sensor histidine kinase ComP and stimulates its activity. Trp-54 is modified by farnesylation, which is essential for activity. Modified by the tryptophan prenyltransferase ComQ before export to the extracellular environment.

The protein resides in the secreted. In terms of biological role, part of a major quorum-sensing system that regulates the development of genetic competence. Acts through the activation of the two-component regulatory system ComP/ComA composed of a sensor histidine kinase, ComP, and a response regulator, ComA. Activates the expression of the genes for biosynthesis of poly-gamma-glutamic acid (gamma-PGA), which is involved in biofilm formation in B.subtilis natto. The chain is ComX pheromone from Bacillus subtilis subsp. natto (strain BEST195).